Reading from the N-terminus, the 66-residue chain is Probable Sec-independent protein translocase protein TatE (66 aa).

The chain crosses the membrane as a helical span at residues 1-21 (MEGISITKLLVIAVLIVLLFG). The tract at residues 46 to 66 (ETPAAKKSDGVEAAPRVENKE) is disordered.

Belongs to the TatA/E family. TatE subfamily.

The protein localises to the cell inner membrane. Functionally, part of the twin-arginine translocation (Tat) system that transports large folded proteins containing a characteristic twin-arginine motif in their signal peptide across membranes. TatE shares overlapping functions with TatA. The chain is Probable Sec-independent protein translocase protein TatE from Edwardsiella ictaluri (strain 93-146).